The sequence spans 111 residues: Flagellar hook-basal body complex protein FliE (111 aa).

Belongs to the FliE family.

It is found in the bacterial flagellum basal body. This is Flagellar hook-basal body complex protein FliE from Sinorhizobium fredii (strain NBRC 101917 / NGR234).